We begin with the raw amino-acid sequence, 603 residues long: Arginine--tRNA ligase (603 aa).

Positions 143 to 153 match the 'HIGH' region motif; that stretch reads PNIAKEMHVGH.

The protein belongs to the class-I aminoacyl-tRNA synthetase family. In terms of assembly, monomer.

It is found in the cytoplasm. The enzyme catalyses tRNA(Arg) + L-arginine + ATP = L-arginyl-tRNA(Arg) + AMP + diphosphate. The polypeptide is Arginine--tRNA ligase (Prochlorococcus marinus (strain MIT 9211)).